The sequence spans 105 residues: Large ribosomal subunit protein uL24 (105 aa).

The protein belongs to the universal ribosomal protein uL24 family. As to quaternary structure, part of the 50S ribosomal subunit.

Functionally, one of two assembly initiator proteins, it binds directly to the 5'-end of the 23S rRNA, where it nucleates assembly of the 50S subunit. Its function is as follows. One of the proteins that surrounds the polypeptide exit tunnel on the outside of the subunit. In Staphylococcus aureus (strain Mu3 / ATCC 700698), this protein is Large ribosomal subunit protein uL24.